The chain runs to 564 residues: Phosphomethylpyrimidine synthase (564 aa).

Substrate contacts are provided by residues Asn203, Met232, Tyr261, His297, 317–319 (SRG), 358–361 (DGLR), and Glu397. A Zn(2+)-binding site is contributed by His401. Tyr424 contacts substrate. His465 is a binding site for Zn(2+). Residues Cys541, Cys544, and Cys549 each coordinate [4Fe-4S] cluster.

Belongs to the ThiC family. It depends on [4Fe-4S] cluster as a cofactor.

The enzyme catalyses 5-amino-1-(5-phospho-beta-D-ribosyl)imidazole + S-adenosyl-L-methionine = 4-amino-2-methyl-5-(phosphooxymethyl)pyrimidine + CO + 5'-deoxyadenosine + formate + L-methionine + 3 H(+). The protein operates within cofactor biosynthesis; thiamine diphosphate biosynthesis. Functionally, catalyzes the synthesis of the hydroxymethylpyrimidine phosphate (HMP-P) moiety of thiamine from aminoimidazole ribotide (AIR) in a radical S-adenosyl-L-methionine (SAM)-dependent reaction. This chain is Phosphomethylpyrimidine synthase, found in Bacteroides fragilis (strain ATCC 25285 / DSM 2151 / CCUG 4856 / JCM 11019 / LMG 10263 / NCTC 9343 / Onslow / VPI 2553 / EN-2).